A 113-amino-acid polypeptide reads, in one-letter code: Large ribosomal subunit protein uL22 (113 aa).

The protein belongs to the universal ribosomal protein uL22 family. In terms of assembly, part of the 50S ribosomal subunit.

This protein binds specifically to 23S rRNA; its binding is stimulated by other ribosomal proteins, e.g. L4, L17, and L20. It is important during the early stages of 50S assembly. It makes multiple contacts with different domains of the 23S rRNA in the assembled 50S subunit and ribosome. Functionally, the globular domain of the protein is located near the polypeptide exit tunnel on the outside of the subunit, while an extended beta-hairpin is found that lines the wall of the exit tunnel in the center of the 70S ribosome. This is Large ribosomal subunit protein uL22 from Anoxybacillus flavithermus (strain DSM 21510 / WK1).